The chain runs to 208 residues: Small ribosomal subunit protein uS4 (208 aa).

The S4 RNA-binding domain maps to 98-158 (RRLDNIVYRL…EKSRKVASIN (61 aa)).

This sequence belongs to the universal ribosomal protein uS4 family. As to quaternary structure, part of the 30S ribosomal subunit. Contacts protein S5. The interaction surface between S4 and S5 is involved in control of translational fidelity.

In terms of biological role, one of the primary rRNA binding proteins, it binds directly to 16S rRNA where it nucleates assembly of the body of the 30S subunit. With S5 and S12 plays an important role in translational accuracy. In Geotalea daltonii (strain DSM 22248 / JCM 15807 / FRC-32) (Geobacter daltonii), this protein is Small ribosomal subunit protein uS4.